Consider the following 200-residue polypeptide: Large ribosomal subunit protein uL4 (200 aa).

The tract at residues 44–71 is disordered; that stretch reads AQKTRAEVSGGGKKPWRQKGTGRARAGS.

Belongs to the universal ribosomal protein uL4 family. Part of the 50S ribosomal subunit.

In terms of biological role, one of the primary rRNA binding proteins, this protein initially binds near the 5'-end of the 23S rRNA. It is important during the early stages of 50S assembly. It makes multiple contacts with different domains of the 23S rRNA in the assembled 50S subunit and ribosome. Functionally, forms part of the polypeptide exit tunnel. This is Large ribosomal subunit protein uL4 from Psychrobacter sp. (strain PRwf-1).